Consider the following 223-residue polypeptide: Thiopurine S-methyltransferase (223 aa).

The S-adenosyl-L-methionine site is built by Trp-10, Leu-45, Glu-66, and Arg-127.

It belongs to the class I-like SAM-binding methyltransferase superfamily. TPMT family.

It localises to the cytoplasm. The enzyme catalyses S-adenosyl-L-methionine + a thiopurine = S-adenosyl-L-homocysteine + a thiopurine S-methylether.. The protein is Thiopurine S-methyltransferase of Shewanella woodyi (strain ATCC 51908 / MS32).